Reading from the N-terminus, the 257-residue chain is Expansin-A10 (257 aa).

The N-terminal stretch at 1-18 is a signal peptide; the sequence is MAPCLLLVLFLLPALATG. The region spanning 50 to 163 is the Expansin-like EG45 domain; it reads GGACGFGDLG…RRVNCLRDGG (114 aa). The Expansin-like CBD domain occupies 173 to 252; that stretch reads FFLTVLISNV…EWDFGKTYTG (80 aa).

It belongs to the expansin family. Expansin A subfamily. As to expression, expressed in panicles and flowers.

Its subcellular location is the secreted. The protein localises to the cell wall. It is found in the membrane. In terms of biological role, may cause loosening and extension of plant cell walls by disrupting non-covalent bonding between cellulose microfibrils and matrix glucans. No enzymatic activity has been found. May be required for rapid internodal elongation in deepwater rice during submergence. This chain is Expansin-A10 (EXPA10), found in Oryza sativa subsp. japonica (Rice).